The sequence spans 289 residues: 4-hydroxybenzoate octaprenyltransferase (289 aa).

The next 8 membrane-spanning stretches (helical) occupy residues 21–40 (PIGTLLLLWPTLWALWLAAG), 95–115 (VLALFAVLALISFALVLTMNS), 116–136 (LTIALSFAALLLAVCYPFMKR), 138–158 (IPIPQLVLGMAFSWSIPMAYA), 161–181 (ANALPLVAWLVFLANLLWTIA), 213–233 (IIGVLQLATLLILLAVGQLMG), 236–256 (AWYYWGLLGAAALFVYQQRLI), and 268–288 (FLNNNYAGALVFIGLVLNYLL).

This sequence belongs to the UbiA prenyltransferase family. It depends on Mg(2+) as a cofactor.

It localises to the cell inner membrane. The catalysed reaction is all-trans-octaprenyl diphosphate + 4-hydroxybenzoate = 4-hydroxy-3-(all-trans-octaprenyl)benzoate + diphosphate. It participates in cofactor biosynthesis; ubiquinone biosynthesis. Functionally, catalyzes the prenylation of para-hydroxybenzoate (PHB) with an all-trans polyprenyl group. Mediates the second step in the final reaction sequence of ubiquinone-8 (UQ-8) biosynthesis, which is the condensation of the polyisoprenoid side chain with PHB, generating the first membrane-bound Q intermediate 3-octaprenyl-4-hydroxybenzoate. The sequence is that of 4-hydroxybenzoate octaprenyltransferase from Aeromonas salmonicida (strain A449).